The following is an 855-amino-acid chain: DNA mismatch repair protein MutS (855 aa).

616–623 (GPNMGGKS) provides a ligand contact to ATP.

It belongs to the DNA mismatch repair MutS family.

Functionally, this protein is involved in the repair of mismatches in DNA. It is possible that it carries out the mismatch recognition step. This protein has a weak ATPase activity. This chain is DNA mismatch repair protein MutS, found in Salmonella schwarzengrund (strain CVM19633).